The chain runs to 405 residues: Subtilisin-like protease 6 (405 aa).

The first 18 residues, 1–18 (FITKAIPIVLAALSAVNG), serve as a signal peptide directing secretion. Residues 19-125 (AKILEAGPHA…VRTSTNGTNL (107 aa)) constitute a propeptide that is removed on maturation. An Inhibitor I9 domain is found at 34 to 118 (KYIVVMKKDV…YIEPDFVVRT (85 aa)). 2 N-linked (GlcNAc...) asparagine glycosylation sites follow: asparagine 121 and asparagine 124. The region spanning 133-405 (SWGLARVGSK…GEGTTGKLIY (273 aa)) is the Peptidase S8 domain. Residues aspartate 165 and histidine 196 each act as charge relay system in the active site. 2 N-linked (GlcNAc...) asparagine glycosylation sites follow: asparagine 250 and asparagine 262. Serine 356 serves as the catalytic Charge relay system.

The protein belongs to the peptidase S8 family.

It localises to the secreted. Its function is as follows. Secreted subtilisin-like serine protease with keratinolytic activity that contributes to pathogenicity. This is Subtilisin-like protease 6 (SUB6) from Trichophyton schoenleinii.